The primary structure comprises 214 residues: NADH-ubiquinone oxidoreductase chain 5 (214 aa).

4 consecutive transmembrane segments (helical) span residues 14–34 (LNTW…TYSI), 58–78 (PLIT…GMII), 92–112 (MPLI…ILAL), and 192–212 (TGLI…MILM).

This sequence belongs to the complex I subunit 5 family.

The protein localises to the mitochondrion inner membrane. It catalyses the reaction a ubiquinone + NADH + 5 H(+)(in) = a ubiquinol + NAD(+) + 4 H(+)(out). In terms of biological role, core subunit of the mitochondrial membrane respiratory chain NADH dehydrogenase (Complex I) that is believed to belong to the minimal assembly required for catalysis. Complex I functions in the transfer of electrons from NADH to the respiratory chain. The immediate electron acceptor for the enzyme is believed to be ubiquinone. This is NADH-ubiquinone oxidoreductase chain 5 (MT-ND5) from Anser caerulescens (Snow goose).